A 102-amino-acid polypeptide reads, in one-letter code: Large ribosomal subunit protein bL21 (102 aa).

Belongs to the bacterial ribosomal protein bL21 family. In terms of assembly, part of the 50S ribosomal subunit. Contacts protein L20.

Functionally, this protein binds to 23S rRNA in the presence of protein L20. In Trichlorobacter lovleyi (strain ATCC BAA-1151 / DSM 17278 / SZ) (Geobacter lovleyi), this protein is Large ribosomal subunit protein bL21.